A 217-amino-acid chain; its full sequence is MKSSNKLMALGIVFSIAVLIVIGTIVYSIINDKKDKGNEMFAYSTQQSLGKDDAPVKVVEFGDFKCPACRTWDVTVLPRLKEEYIDKGKVQLYFINFPFIGKDSDLGAAAGEAIYKQDQDSFWIFYDEIYQSQKKDTEEWITEELLLNIVKEKLPKIDVEQFKKDLHSKEIKEKVRKDSDRAQKLKVQGAPSVYVNGNLANPDFDSLKKAIDKELKK.

An N-terminal signal peptide occupies residues 1–28 (MKSSNKLMALGIVFSIAVLIVIGTIVYS). Cys66 and Cys69 form a disulfide bridge.

It belongs to the thioredoxin family. DsbA subfamily.

In terms of biological role, may be required for disulfide bond formation in some proteins. The sequence is that of Probable disulfide bond formation protein D (bdbD) from Bacillus anthracis.